The sequence spans 178 residues: PSTTSSKSPKRRAKSPRRKRTGPTVSDLILMAMSASSDRGGLSLAALKKDLKGRGYDVVRNKGRVLMAIKRLVANKSVVKAKGFYKLNKNPPTPRRRVAKRKKPKAKRAKRGRKRKAAPKKKSAKKKRKRRRRKSKSPKKARKARRAKSPRRARSPRRSKSPRKAKRRTTKTRRRAKK.

2 disordered regions span residues 1-27 and 77-178; these read PSTT…TVSD and SVVK…RAKK. 2 stretches are compositionally biased toward basic residues: residues 8-21 and 94-178; these read SPKR…RKRT and PRRR…RAKK. The region spanning 21–89 is the H15 domain; the sequence is TGPTVSDLIL…KAKGFYKLNK (69 aa).

As to expression, male germ cells.

It is found in the nucleus. Its subcellular location is the chromosome. Replaces histones in the chromatin of sperm during the haploid phase of spermatogenesis. Compacts sperm DNA into a highly condensed, stable and inactive complex. The chain is Protamine-like protein from Mullus surmuletus (Striped red mullet).